Consider the following 318-residue polypeptide: UDP-N-acetylenolpyruvoylglucosamine reductase (318 aa).

Positions 38-204 constitute an FAD-binding PCMH-type domain; the sequence is IGGVCPVIVE…LGIEILLKEG (167 aa). The active site involves Arg182. Positions 212 to 229 are enriched in basic and acidic residues; the sequence is SLKDKRDRRNSSQPENKK. The disordered stretch occupies residues 212–232; it reads SLKDKRDRRNSSQPENKKSAG. The Proton donor role is filled by Ser233. The active site involves Glu310.

It belongs to the MurB family. Requires FAD as cofactor.

It localises to the cytoplasm. It carries out the reaction UDP-N-acetyl-alpha-D-muramate + NADP(+) = UDP-N-acetyl-3-O-(1-carboxyvinyl)-alpha-D-glucosamine + NADPH + H(+). Its pathway is cell wall biogenesis; peptidoglycan biosynthesis. Cell wall formation. The sequence is that of UDP-N-acetylenolpyruvoylglucosamine reductase from Leptospira interrogans serogroup Icterohaemorrhagiae serovar Lai (strain 56601).